A 308-amino-acid polypeptide reads, in one-letter code: tRNA pseudouridine synthase B (308 aa).

Asp-47 (nucleophile) is an active-site residue.

This sequence belongs to the pseudouridine synthase TruB family. Type 1 subfamily.

It catalyses the reaction uridine(55) in tRNA = pseudouridine(55) in tRNA. Responsible for synthesis of pseudouridine from uracil-55 in the psi GC loop of transfer RNAs. The protein is tRNA pseudouridine synthase B of Rhodospirillum rubrum (strain ATCC 11170 / ATH 1.1.1 / DSM 467 / LMG 4362 / NCIMB 8255 / S1).